A 485-amino-acid polypeptide reads, in one-letter code: ATP-dependent 6-phosphofructokinase 7 (485 aa).

ATP-binding positions include glycine 101, 164–165 (RG), and 189–192 (GDGT). Mg(2+) is bound at residue aspartate 190. Substrate contacts are provided by residues 218–220 (TID), 263–265 (MGR), glutamate 319, and 374–377 (YMIR). The Proton acceptor role is filled by aspartate 220. The tract at residues 449-485 (SFLGPKDTSEEKKELPETPLLDDGAVDIPPVTKEVTK) is disordered. The span at 455 to 464 (DTSEEKKELP) shows a compositional bias: basic and acidic residues.

The protein belongs to the phosphofructokinase type A (PFKA) family. PPi-dependent PFK group II subfamily. Atypical ATP-dependent clade 'X' sub-subfamily. Homotetramer. Mg(2+) is required as a cofactor. As to expression, expressed in roots, leaves, stems and flowers.

It is found in the cytoplasm. It catalyses the reaction beta-D-fructose 6-phosphate + ATP = beta-D-fructose 1,6-bisphosphate + ADP + H(+). Its pathway is carbohydrate degradation; glycolysis; D-glyceraldehyde 3-phosphate and glycerone phosphate from D-glucose: step 3/4. Its activity is regulated as follows. Allosterically activated by AMP. Its function is as follows. Catalyzes the phosphorylation of D-fructose 6-phosphate to fructose 1,6-bisphosphate by ATP, the first committing step of glycolysis. This chain is ATP-dependent 6-phosphofructokinase 7, found in Arabidopsis thaliana (Mouse-ear cress).